A 348-amino-acid chain; its full sequence is Anthranilate phosphoribosyltransferase (348 aa).

5-phospho-alpha-D-ribose 1-diphosphate is bound by residues Gly-87, 90 to 91 (GD), Thr-95, 97 to 100 (NIST), 115 to 123 (KHGNRSASG), and Ser-127. An anthranilate-binding site is contributed by Gly-87. Ser-99 serves as a coordination point for Mg(2+). Asn-118 serves as a coordination point for anthranilate. Arg-173 contributes to the anthranilate binding site. Positions 232 and 233 each coordinate Mg(2+).

It belongs to the anthranilate phosphoribosyltransferase family. In terms of assembly, homodimer. The cofactor is Mg(2+).

The enzyme catalyses N-(5-phospho-beta-D-ribosyl)anthranilate + diphosphate = 5-phospho-alpha-D-ribose 1-diphosphate + anthranilate. The protein operates within amino-acid biosynthesis; L-tryptophan biosynthesis; L-tryptophan from chorismate: step 2/5. Its function is as follows. Catalyzes the transfer of the phosphoribosyl group of 5-phosphorylribose-1-pyrophosphate (PRPP) to anthranilate to yield N-(5'-phosphoribosyl)-anthranilate (PRA). In Synechococcus sp. (strain WH7803), this protein is Anthranilate phosphoribosyltransferase.